We begin with the raw amino-acid sequence, 561 residues long: 4-coumarate--CoA ligase 3 (561 aa).

ATP is bound by residues S213, S214, G215, T216, T217, and K221. Residues Y263 and S267 each contribute to the (E)-4-coumaroyl-AMP site. CoA is bound at residue K284. Positions 286–355 (EIGALLDLIQ…RRLPQAILGQ (70 aa)) are SBD1. A333, Q355, G356, T360, and M368 together coordinate (E)-4-coumaroyl-AMP. The ATP site is built by Q355, G356, and T360. The SBD2 stretch occupies residues 356–423 (GYGMTEAGPV…IRGQQIMKEY (68 aa)). ATP contacts are provided by D444 and R459. (E)-4-coumaroyl-AMP is bound by residues K461 and K465. CoA-binding residues include K467 and G468. K550 serves as a coordination point for ATP.

It belongs to the ATP-dependent AMP-binding enzyme family. The cofactor is Mg(2+). Preferentially expressed in leaves, flowers and siliques.

The enzyme catalyses (E)-4-coumarate + ATP + CoA = (E)-4-coumaroyl-CoA + AMP + diphosphate. It carries out the reaction (E)-caffeate + ATP + CoA = (E)-caffeoyl-CoA + AMP + diphosphate. It catalyses the reaction (E)-ferulate + ATP + CoA = (E)-feruloyl-CoA + AMP + diphosphate. The catalysed reaction is (E)-4-coumarate + ATP + H(+) = (E)-4-coumaroyl-AMP + diphosphate. The enzyme catalyses (E)-4-coumaroyl-AMP + CoA = (E)-4-coumaroyl-CoA + AMP + H(+). It carries out the reaction (E)-caffeate + ATP + H(+) = (E)-caffeoyl-AMP + diphosphate. It catalyses the reaction (E)-caffeoyl-AMP + CoA = (E)-caffeoyl-CoA + AMP + H(+). The catalysed reaction is (E)-ferulate + ATP + H(+) = (E)-feruloyl-AMP + diphosphate. The enzyme catalyses (E)-feruloyl-AMP + CoA = (E)-feruloyl-CoA + AMP + H(+). It participates in phytoalexin biosynthesis; 3,4',5-trihydroxystilbene biosynthesis; 3,4',5-trihydroxystilbene from trans-4-coumarate: step 1/2. Its function is as follows. Produces CoA thioesters of a variety of hydroxy- and methoxy-substituted cinnamic acids, which are used to synthesize several phenylpropanoid-derived compounds, including anthocyanins, flavonoids, isoflavonoids, coumarins, lignin, suberin and wall-bound phenolics. Follows a two-step reaction mechanism, wherein the carboxylate substrate first undergoes adenylation by ATP, followed by a thioesterification in the presence of CoA to yield the final CoA thioesters. The chain is 4-coumarate--CoA ligase 3 from Arabidopsis thaliana (Mouse-ear cress).